The primary structure comprises 545 residues: MAAKEVVFGNDARVKMLAGVNILANAVKVTLGPKGRNVVLDKSFGSPLITKDGVSVAKEIELEDKFENMGAQMVKEVASKANDAAGDGTTTATVLAQAIVTEGLKAVAAGMNPMDLKRGIDKAVAAAVIELKNLSQDCADSKAIAQVGTISANSDESIGQIIATAMEKVGKEGVITVEEGQALENELDVVEGMQFDRGYLSPYFINKPETGSVELDHPFVLLVDKKISNIRELLPILEGLAKTGKPLLIVAEDVEGEALATLVVNNMRGIVKVAAVKAPGFGDRRKAMLQDVAILTGGTVIAEEIGLELEKATLEDLGTAKRVVITKDNTTIIDGNGEQAQIEARVSQIKQQIEESTSDYDKEKLQERMAKLAGGVAVIKVGAATEVEMKEKKARVEDALHATRAAVEEGVVPGGGVALVRVASKIADVEVANEDQKHGVVIALRAMEAPLRQIATNAGEEASVVANTVKNGSGNYGYNAGNDTYGDMLEMGILDPTKVTRSALQFAASIAGLMITTEAMVAELPKADAPDMGGMGGMGGMGGMM.

Residues 30 to 33 (TLGP), Lys51, 87 to 91 (DGTTT), Gly415, and Asp495 contribute to the ATP site.

It belongs to the chaperonin (HSP60) family. In terms of assembly, forms a cylinder of 14 subunits composed of two heptameric rings stacked back-to-back. Interacts with the co-chaperonin GroES.

It is found in the cytoplasm. The catalysed reaction is ATP + H2O + a folded polypeptide = ADP + phosphate + an unfolded polypeptide.. Functionally, together with its co-chaperonin GroES, plays an essential role in assisting protein folding. The GroEL-GroES system forms a nano-cage that allows encapsulation of the non-native substrate proteins and provides a physical environment optimized to promote and accelerate protein folding. The sequence is that of Chaperonin GroEL from Shewanella sp. (strain ANA-3).